The primary structure comprises 193 residues: ECF RNA polymerase sigma factor SigK (193 aa).

Residues 35–101 (LYDRTRSRVY…RRAVDRVRSE (67 aa)) form a sigma-70 factor domain-2 region. The short motif at 59-62 (ETTQ) is the Polymerase core binding element. Residues 140–187 (MGSLSDLQREAIQLAYYEGLTYVQVSERLSANLATIKSRMRDGIRGLK) are sigma-70 factor domain-4. The H-T-H motif DNA-binding region spans 161–180 (YVQVSERLSANLATIKSRMR).

The protein belongs to the sigma-70 factor family. ECF subfamily. Interacts transiently with the RNA polymerase catalytic core formed by RpoA, RpoB, RpoC and RpoZ (2 alpha, 1 beta, 1 beta' and 1 omega subunit) to form the RNA polymerase holoenzyme that can initiate transcription. Interacts (via sigma-70 factor domain 4) with anti-sigma-K factor RskA.

Functionally, sigma factors are initiation factors that promote the attachment of RNA polymerase to specific initiation sites and are then released. Extracytoplasmic function (ECF) sigma factors are held in an inactive form by an anti-sigma factor until released by regulated intramembrane proteolysis. In Mycobacterium sp. (strain JLS), this protein is ECF RNA polymerase sigma factor SigK (sigK).